Here is an 84-residue protein sequence, read N- to C-terminus: Cytochrome b559 subunit alpha (84 aa).

The chain crosses the membrane as a helical span at residues 22 to 36 (IIHSITIPSLFVSGW). Residue histidine 24 coordinates heme.

The protein belongs to the PsbE/PsbF family. As to quaternary structure, heterodimer of an alpha subunit and a beta subunit. PSII is composed of 1 copy each of membrane proteins PsbA, PsbB, PsbC, PsbD, PsbE, PsbF, PsbH, PsbI, PsbJ, PsbK, PsbL, PsbM, PsbT, PsbX, PsbY, PsbZ, Psb30/Ycf12, at least 3 peripheral proteins of the oxygen-evolving complex and a large number of cofactors. It forms dimeric complexes. Heme b is required as a cofactor.

It is found in the plastid. The protein resides in the chloroplast thylakoid membrane. Functionally, this b-type cytochrome is tightly associated with the reaction center of photosystem II (PSII). PSII is a light-driven water:plastoquinone oxidoreductase that uses light energy to abstract electrons from H(2)O, generating O(2) and a proton gradient subsequently used for ATP formation. It consists of a core antenna complex that captures photons, and an electron transfer chain that converts photonic excitation into a charge separation. This is Cytochrome b559 subunit alpha from Phaeodactylum tricornutum (strain CCAP 1055/1).